The primary structure comprises 81 residues: Sulfur carrier protein TusA (81 aa).

Cysteine 19 functions as the Cysteine persulfide intermediate in the catalytic mechanism.

Belongs to the sulfur carrier protein TusA family. As to quaternary structure, interacts with IscS.

Its subcellular location is the cytoplasm. It participates in tRNA modification. Its function is as follows. Sulfur carrier protein involved in sulfur trafficking in the cell. Part of a sulfur-relay system required for 2-thiolation during synthesis of 2-thiouridine of the modified wobble base 5-methylaminomethyl-2-thiouridine (mnm(5)s(2)U) in tRNA. Interacts with IscS and stimulates its cysteine desulfurase activity. Accepts an activated sulfur from IscS, which is then transferred to TusD, and thus determines the direction of sulfur flow from IscS to 2-thiouridine formation. Also appears to be involved in sulfur transfer for the biosynthesis of molybdopterin. In Klebsiella pneumoniae subsp. pneumoniae (strain ATCC 700721 / MGH 78578), this protein is Sulfur carrier protein TusA.